A 93-amino-acid chain; its full sequence is Phosphoribosyl-ATP pyrophosphatase (93 aa).

Belongs to the PRA-PH family.

It localises to the cytoplasm. The catalysed reaction is 1-(5-phospho-beta-D-ribosyl)-ATP + H2O = 1-(5-phospho-beta-D-ribosyl)-5'-AMP + diphosphate + H(+). It participates in amino-acid biosynthesis; L-histidine biosynthesis; L-histidine from 5-phospho-alpha-D-ribose 1-diphosphate: step 2/9. This is Phosphoribosyl-ATP pyrophosphatase from Mycobacterium sp. (strain JLS).